The sequence spans 36 residues: Pancreatic polypeptide (36 aa).

The residue at position 36 (Tyr36) is a Tyrosine amide.

It belongs to the NPY family.

Its subcellular location is the secreted. In terms of biological role, hormone secreted by pancreatic cells that acts as a regulator of pancreatic and gastrointestinal functions probably by signaling through the G protein-coupled receptor NPY4R2. The chain is Pancreatic polypeptide (PPY) from Chinchilla chinchilla (Short-tailed chinchilla).